The chain runs to 602 residues: Bifunctional lycopene cyclase/phytoene synthase (602 aa).

Positions 1 to 241 (MYDYAFVHLK…IVGGMAAFDQ (241 aa)) are lycopene beta-cyclase. The next 7 membrane-spanning stretches (helical) occupy residues 6–26 (FVHLKFTVPAAVLLTAIAYPI), 30–50 (IHLIQTGFLVVVAFTAALPWD), 76–96 (FEELFFFVIQTYITALVYILF), 118–138 (VVKVTGQVVLVALSVWGWNAA), 146–166 (YLGLILVWACPFLLAIWTLAG), 168–188 (FILSLPWYATVLPMFLPTFYL), and 230–250 (MLIVGGMAAFDQYLAVIYAFP). The tract at residues 248 to 602 (AFPTLFPKVN…STLLRALYEQ (355 aa)) is phytoene synthase.

It in the N-terminal section; belongs to the lycopene beta-cyclase family. In the C-terminal section; belongs to the phytoene/squalene synthase family.

Its subcellular location is the membrane. It catalyses the reaction all-trans-lycopene = gamma-carotene. The enzyme catalyses gamma-carotene = all-trans-beta-carotene. The catalysed reaction is 2 (2E,6E,10E)-geranylgeranyl diphosphate = 15-cis-phytoene + 2 diphosphate. It functions in the pathway carotenoid biosynthesis; beta-carotene biosynthesis. The protein operates within carotenoid biosynthesis; phytoene biosynthesis; all-trans-phytoene from geranylgeranyl diphosphate: step 1/1. Its function is as follows. Bifunctional enzyme that catalyzes the reactions from geranylgeranyl diphosphate to phytoene (phytoene synthase) and from lycopene to beta-carotene via the intermediate gamma-carotene and from 3,4-didehydrolycopene to torulene (lycopene cyclase). Torulene is further processed to the acidic carotenoid neurosporaxanthin. The cyclase preferentially catalyzes single cyclizations at only one end of the substrate to produce monocyclic carotenoids. Neurosporaxanthin is synthesized from geranyl-geranyl pyrophosphate (GGPP) through several enzymatic activities. Phytoene synthase activity performed by the bifunctional enzyme al-2 first produces phytoene from geranyl-geranyl pyrophosphate (GGPP). The phytoene dehydrogenase al-1 then introduces 5 desaturations to lead to 3,4-didehydrolycopene via the intermediates phytofluene, zeta-carotene, neurosporene and lycopene. Al-2 cyclase activity then converts 3,4-didehydrolycopene into torulene. Al-2 can also convet lycopene into gamma-carotene which in turn is converted to beta-carotene by an additional al-2 cyclization reaction. Torulene is the substrate of the dioxidase cao-2 that breaks the molecule, removing five carbon atoms to yield beta-apo-4'-carotenal, whereas the aldehyde dehydrogenase ylo-1 mediates the last step by converting beta-apo-4'-carotenal into neurosporaxanthin. The polypeptide is Bifunctional lycopene cyclase/phytoene synthase (Neurospora crassa (strain ATCC 24698 / 74-OR23-1A / CBS 708.71 / DSM 1257 / FGSC 987)).